The primary structure comprises 693 residues: Elongation factor G (693 aa).

A tr-type G domain is found at 8–282; that stretch reads EKTRNIGIMA…AVLDYLPSPL (275 aa). GTP contacts are provided by residues 17 to 24, 81 to 85, and 135 to 138; these read AHVDAGKT, DTPGH, and NKMD.

The protein belongs to the TRAFAC class translation factor GTPase superfamily. Classic translation factor GTPase family. EF-G/EF-2 subfamily.

Its subcellular location is the cytoplasm. Catalyzes the GTP-dependent ribosomal translocation step during translation elongation. During this step, the ribosome changes from the pre-translocational (PRE) to the post-translocational (POST) state as the newly formed A-site-bound peptidyl-tRNA and P-site-bound deacylated tRNA move to the P and E sites, respectively. Catalyzes the coordinated movement of the two tRNA molecules, the mRNA and conformational changes in the ribosome. The protein is Elongation factor G of Enterococcus faecalis (strain ATCC 700802 / V583).